We begin with the raw amino-acid sequence, 567 residues long: Cytochrome P450 monooxygenase 69 (567 aa).

The helical transmembrane segment at 7 to 24 threads the bilayer; the sequence is ELAALTVVLLATGVLFYA. 4 N-linked (GlcNAc...) asparagine glycosylation sites follow: asparagine 25, asparagine 81, asparagine 223, and asparagine 279. A heme-binding site is contributed by cysteine 475.

Belongs to the cytochrome P450 family. Heme is required as a cofactor.

It is found in the membrane. It functions in the pathway secondary metabolite biosynthesis. Its function is as follows. Cytochrome P450 monooxygenase that is able to use 4-ethoxybenzoic acid as a substrate for oxidation. The polypeptide is Cytochrome P450 monooxygenase 69 (Postia placenta (strain ATCC 44394 / Madison 698-R) (Brown rot fungus)).